The chain runs to 878 residues: Phosphoenolpyruvate carboxylase (878 aa).

Active-site residues include His-137 and Lys-545.

This sequence belongs to the PEPCase type 1 family. It depends on Mg(2+) as a cofactor.

It carries out the reaction oxaloacetate + phosphate = phosphoenolpyruvate + hydrogencarbonate. Functionally, forms oxaloacetate, a four-carbon dicarboxylic acid source for the tricarboxylic acid cycle. In Yersinia pseudotuberculosis serotype O:1b (strain IP 31758), this protein is Phosphoenolpyruvate carboxylase.